The following is a 469-amino-acid chain: MSAPRTLYDKIWDDHVVDQQEDGTCLLYIDRHLVHEVTSPQAFEGLHMAGRPVRHPEKTLAVVDHNVPTSPDRINGIQNEESRIQVEALARNAADFGVEYYSERDKRQGIVHIVGPEQGFTLPGMTIVCGDSHTSTHGAFGALAHGIGTSEVEHVLATQTLIQKKAKNMLVRVDGKLPAGVTAKDIVLAIIGEIGTAGGTGYVIEYAGEAIRSLSMEGRMTICNMSIEGGARAGLIAPDETTFEYIKGRPRAPQGETLEQAINYWKTLHSDEGAHFDKIVTLDAGSLPPIVSWGSSPEDVVSVTGVVPNPDDIADETKRASKWRALDYMGLKPGTKITDIAVDRVFIGSCTNGRIEDLRAAAKVVEGKKVAPTVNAMIVPGSGLVKEQAEAEGLHKIFIEAGFDWREPGCSMCLAMNDDRLKPGERCASTSNRNFEGRQGFKGRTHLVSPAMAAAAAIAGHFVDIRAWK.

Residues Cys-350, Cys-410, and Cys-413 each coordinate [4Fe-4S] cluster.

This sequence belongs to the aconitase/IPM isomerase family. LeuC type 1 subfamily. Heterodimer of LeuC and LeuD. [4Fe-4S] cluster serves as cofactor.

It carries out the reaction (2R,3S)-3-isopropylmalate = (2S)-2-isopropylmalate. It functions in the pathway amino-acid biosynthesis; L-leucine biosynthesis; L-leucine from 3-methyl-2-oxobutanoate: step 2/4. In terms of biological role, catalyzes the isomerization between 2-isopropylmalate and 3-isopropylmalate, via the formation of 2-isopropylmaleate. The protein is 3-isopropylmalate dehydratase large subunit of Brucella melitensis biotype 2 (strain ATCC 23457).